Here is a 172-residue protein sequence, read N- to C-terminus: Adenine phosphoribosyltransferase (172 aa).

Belongs to the purine/pyrimidine phosphoribosyltransferase family. Homodimer.

The protein resides in the cytoplasm. It carries out the reaction AMP + diphosphate = 5-phospho-alpha-D-ribose 1-diphosphate + adenine. The protein operates within purine metabolism; AMP biosynthesis via salvage pathway; AMP from adenine: step 1/1. Functionally, catalyzes a salvage reaction resulting in the formation of AMP, that is energically less costly than de novo synthesis. This chain is Adenine phosphoribosyltransferase, found in Crocosphaera subtropica (strain ATCC 51142 / BH68) (Cyanothece sp. (strain ATCC 51142)).